Here is a 173-residue protein sequence, read N- to C-terminus: Ribosome maturation factor RimM (173 aa).

One can recognise a PRC barrel domain in the interval 98 to 170 (EDEYYWCDLI…RMLITPLEGL (73 aa)).

The protein belongs to the RimM family. Binds ribosomal protein uS19.

Its subcellular location is the cytoplasm. An accessory protein needed during the final step in the assembly of 30S ribosomal subunit, possibly for assembly of the head region. Essential for efficient processing of 16S rRNA. May be needed both before and after RbfA during the maturation of 16S rRNA. It has affinity for free ribosomal 30S subunits but not for 70S ribosomes. The chain is Ribosome maturation factor RimM from Pelobacter propionicus (strain DSM 2379 / NBRC 103807 / OttBd1).